Reading from the N-terminus, the 174-residue chain is Translation initiation factor IF-3 (174 aa).

Belongs to the IF-3 family. As to quaternary structure, monomer.

Its subcellular location is the cytoplasm. Its function is as follows. IF-3 binds to the 30S ribosomal subunit and shifts the equilibrium between 70S ribosomes and their 50S and 30S subunits in favor of the free subunits, thus enhancing the availability of 30S subunits on which protein synthesis initiation begins. The polypeptide is Translation initiation factor IF-3 (Helicobacter hepaticus (strain ATCC 51449 / 3B1)).